Reading from the N-terminus, the 153-residue chain is 6,7-dimethyl-8-ribityllumazine synthase 1 (153 aa).

Residues phenylalanine 16, 50–52, and 74–76 each bind 5-amino-6-(D-ribitylamino)uracil; these read AYE and CVI. 79–80 is a (2S)-2-hydroxy-3-oxobutyl phosphate binding site; that stretch reads ET. Catalysis depends on histidine 82, which acts as the Proton donor. Residue phenylalanine 107 coordinates 5-amino-6-(D-ribitylamino)uracil. Arginine 121 is a binding site for (2S)-2-hydroxy-3-oxobutyl phosphate.

Belongs to the DMRL synthase family.

It carries out the reaction (2S)-2-hydroxy-3-oxobutyl phosphate + 5-amino-6-(D-ribitylamino)uracil = 6,7-dimethyl-8-(1-D-ribityl)lumazine + phosphate + 2 H2O + H(+). The protein operates within cofactor biosynthesis; riboflavin biosynthesis; riboflavin from 2-hydroxy-3-oxobutyl phosphate and 5-amino-6-(D-ribitylamino)uracil: step 1/2. Catalyzes the formation of 6,7-dimethyl-8-ribityllumazine by condensation of 5-amino-6-(D-ribitylamino)uracil with 3,4-dihydroxy-2-butanone 4-phosphate. This is the penultimate step in the biosynthesis of riboflavin. This chain is 6,7-dimethyl-8-ribityllumazine synthase 1, found in Caulobacter vibrioides (strain ATCC 19089 / CIP 103742 / CB 15) (Caulobacter crescentus).